Reading from the N-terminus, the 556-residue chain is Beta-caryophyllene synthase TPS9FN (556 aa).

(2E,6E)-farnesyl diphosphate contacts are provided by Arg273, Asp310, Asp314, Arg451, and Asp454. Mg(2+) contacts are provided by Asp310 and Asp314. Positions 310 to 314 (DDIYD) match the DDXXD motif motif. Asp454, Ser458, and Glu462 together coordinate Mg(2+).

Belongs to the terpene synthase family. Tpsb subfamily. It depends on Mg(2+) as a cofactor. Requires Mn(2+) as cofactor. In terms of tissue distribution, expressed in glandular trichomes two to four weeks after flowering onset.

The enzyme catalyses (2E,6E)-farnesyl diphosphate = (-)-(E)-beta-caryophyllene + diphosphate. It carries out the reaction (2E,6E)-farnesyl diphosphate = alpha-humulene + diphosphate. The protein operates within secondary metabolite biosynthesis; terpenoid biosynthesis. Involved in sesquiterpene olefins biosynthesis, constituants of cannabinoids and terpenoids-rich resins. Catalyzes mainly the conversion of (2E)-farnesyl diphosphate to beta-caryophyllene and alpha-humulene. Can also use (2E)-geranyl diphosphate as substrate with low efficiency. This chain is Beta-caryophyllene synthase TPS9FN, found in Cannabis sativa (Hemp).